We begin with the raw amino-acid sequence, 600 residues long: Adenine deaminase (600 aa).

It belongs to the metallo-dependent hydrolases superfamily. Adenine deaminase family. The cofactor is Mn(2+).

The catalysed reaction is adenine + H2O + H(+) = hypoxanthine + NH4(+). In Bradyrhizobium sp. (strain BTAi1 / ATCC BAA-1182), this protein is Adenine deaminase.